Here is an 877-residue protein sequence, read N- to C-terminus: Dystroglycan 1 (877 aa).

A signal peptide spans 1–29 (MRMSAGLSLLIPLWGRTFLLLLSVAVTQS). A required for laminin recognition region spans residues 30 to 408 (RWPSEPSDAV…GHIRPTMTIP (379 aa)). Residues 49-71 (SMHSVLSDLHEAVPTVVGIPDGT) are O-glycosylated at one site. The N-linked (GlcNAc...) asparagine glycan is linked to Asn-141. Cys-182 and Cys-264 are oxidised to a cystine. Residues 316–468 (ATPTPVTAIG…PPTRIRTTTS (153 aa)) form a mucin-like domain region. O-linked (Man6P...) threonine glycans are attached at residues Thr-317, Thr-319, and Thr-379. Disordered stretches follow at residues 380–444 (PTLG…PVPR) and 458–480 (SPPTRIRTTTSGLPRGEPNQRPE). Low complexity predominate over residues 413–433 (PTAVATPPTPTTKNPRVSXPT). The segment at 446–468 (TTKAPITRLETASPPTRIRTTTS) is O-glycosylated at seven sites with GalNAc. The Peptidase S72 domain maps to 585 to 694 (RAPARFTAKF…MSIAVTGSGS (110 aa)). N-linked (GlcNAc...) asparagine glycans are attached at residues Asn-623, Asn-631, and Asn-643. Cys-651 and Cys-695 are disulfide-bonded. Residues 706 to 717 (PKRVPSEAPPTE) are compositionally biased toward pro residues. The segment at 706–727 (PKRVPSEAPPTEVPDRDPEKSS) is disordered. Residues 718-727 (VPDRDPEKSS) are compositionally biased toward basic and acidic residues. The chain crosses the membrane as a helical span at residues 732–757 (YLHTVIPAVVVAAILLIAGIIAMICY). A Nuclear localization signal motif is present at residues 758–764 (RKKRKGK). Thr-772 carries the post-translational modification Phosphothreonine. The tract at residues 801-877 (LQEEKAPLPP…YRSPPPYVPP (77 aa)) is required for interaction with CAV3. The interval 805 to 877 (KAPLPPPEYP…YRSPPPYVPP (73 aa)) is disordered. Over residues 814–828 (PNQSVPETTPLNQDT) the composition is skewed to polar residues. Over residues 841 to 852 (NAPPYQPPPPFT) the composition is skewed to pro residues. Residues 862–877 (PKNMTPYRSPPPYVPP) are required for binding DMD and UTRN. The short motif at 871-874 (PPPY) is the PPXY motif element. A Phosphotyrosine; by SRC modification is found at Tyr-874.

Monomer. Heterodimer of alpha- and beta-dystroglycan subunits which are the central components of the dystrophin-glycoprotein complex. This complex then can form a dystrophin-associated glycoprotein complex (DGC) which is composed of three subcomplexes: a cytoplasmic complex comprised of DMD (or UTRN), DTNA and a number of syntrophins, such as SNTB1, SNTB2, SNTG1 and SNTG2, the transmembrane dystroglycan complex, and the sarcoglycan-sarcospan complex. Interacts (via the N-terminal of alphaDAG1) with LARGE1; the interaction enhances laminin binding. Interacts with SGCD. Interacts with AGR2 and AGR3. Interacts (betaDAG1) with DMD; the interaction is inhibited by phosphorylation on the PPXY motif. Interacts (betaDAG1, via its PPXY motif) with UTRN (via its WWW and ZZ domains); the interaction is inhibited by phosphorylation on the PPXY motif. Interacts (betaDAG1, via its phosphorylated PPXY motif) with the SH2 domain-containing proteins, FYN, CSK, NCK and SHC. Interacts (betaDAG1) with CAV3 (via a central WW-like domain); the interaction disrupts the binding of DMD. BetaDAG1 directly interacts with ANK3, but not with ANK2; this interaction does not interfere with DMD-binding and is required for retention at costameres. Identified in a dystroglycan complex that contains at least PRX, DRP2, UTRN, DMD and DAG1. Interacts with POMGNT1. BetaDAG1 interacts with CD93. Post-translationally, O-glycosylated. POMGNT1 catalyzes the initial addition of N-acetylglucosamine, giving rise to the GlcNAc(beta1-2)Man(alpha1-)O-Ser/Thr moiety and thus providing the necessary basis for the addition of further carbohydrate moieties. Heavily O-glycosylated comprising of up to two thirds of its mass and the carbohydrate composition differs depending on tissue type. Mucin-type O-glycosylation is important for ligand binding activity. O-mannosylation of alpha-DAG1 is found in high abundance in both brain and muscle where the most abundant glycan is Sia-alpha-2-3-Gal-beta-1-4-Glc-NAc-beta-1-2-Man. In muscle, glycosylation on Thr-317, Thr-319 and Thr-379 by a phosphorylated O-mannosyl glycan with the structure 2-(N-acetylamido)-2-deoxygalactosyl-beta-1,3-2-(N-acetylamido)-2-deoxyglucosyl-beta-1,4-6-phosphomannose is mediated by like-acetylglucosaminyltransferase (LARGE1) protein amd is required for laminin binding. O-glycosylated in the N-terminal region with a core 1 or possibly core 8 glycan. The brain form displays a unique glycosylation pattern which is absent in other tissues; this form shows enhanced binding to laminin LAMA5 compared to the skeletal muscle form. In terms of processing, N-glycosylated. Autolytic cleavage produces the alpha and beta subunits. In cutaneous cells, as well as in certain pathological conditions, shedding of beta-dystroglycan can occur releasing a peptide of about 30 kDa. Post-translationally, SRC-mediated phosphorylation of the PPXY motif of the beta subunit recruits SH2 domain-containing proteins, but inhibits binding to WWW domain-containing proteins, DMD and UTRN. This phosphorylation also inhibits nuclear entry.

It localises to the secreted. The protein localises to the extracellular space. It is found in the cell membrane. The protein resides in the cytoplasm. Its subcellular location is the cytoskeleton. It localises to the nucleus. The protein localises to the nucleoplasm. It is found in the sarcolemma. The protein resides in the postsynaptic cell membrane. Functionally, the dystroglycan complex is involved in a number of processes including laminin and basement membrane assembly, sarcolemmal stability, cell survival, peripheral nerve myelination, nodal structure, cell migration, and epithelial polarization. Its function is as follows. Extracellular peripheral glycoprotein that acts as a receptor for extracellular matrix proteins containing laminin-G domains. Receptor for laminin-2 (LAMA2) and agrin in peripheral nerve Schwann cells. Also acts as a receptor for laminin LAMA5. In terms of biological role, transmembrane protein that plays important roles in connecting the extracellular matrix to the cytoskeleton. Acts as a cell adhesion receptor in both muscle and non-muscle tissues. Receptor for both DMD and UTRN and, through these interactions, scaffolds axin to the cytoskeleton. Also functions in cell adhesion-mediated signaling and implicated in cell polarity. This chain is Dystroglycan 1, found in Sus scrofa (Pig).